Consider the following 456-residue polypeptide: Mitochondrial import inner membrane translocase subunit TIM50 (456 aa).

The N-terminal 22 residues, 1 to 22, are a transit peptide targeting the mitochondrion; the sequence is MSLSKLSQKCFSRHHARTFIRF. The Mitochondrial matrix segment spans residues 23-171; that stretch reads SSSDFQSLLG…RRKRMERNTR (149 aa). Disordered stretches follow at residues 101-120 and 132-165; these read ETEKVASSPAPATPPSAIDE and EEAAASKTSAPSGSSGDNNDQPGNAEEVEARRKR. The segment covering 137–153 has biased composition (polar residues); sequence SKTSAPSGSSGDNNDQP. Residues 172–192 form a helical membrane-spanning segment; the sequence is IGGYVLLGGSVIGFISFCFYY. Over 193-456 the chain is Mitochondrial intermembrane; that stretch reads GRAQRDEAGN…LFGFRRHASA (264 aa). Residues 247–391 form the FCP1 homology domain; sequence YLQPKYTIVI…VDLAELLKTI (145 aa).

This sequence belongs to the TIM50 family. In terms of assembly, component of the TIM23 complex at least composed of tim-23, tim-17 and tim-50.

It is found in the mitochondrion inner membrane. Its function is as follows. Essential component of the TIM23 complex, a complex that mediates the translocation of transit peptide-containing proteins across the mitochondrial inner membrane. The polypeptide is Mitochondrial import inner membrane translocase subunit TIM50 (scpl-4) (Caenorhabditis briggsae).